The following is a 126-amino-acid chain: Holo-[acyl-carrier-protein] synthase (126 aa).

Mg(2+) is bound by residues Asp-9 and Glu-57.

It belongs to the P-Pant transferase superfamily. AcpS family. The cofactor is Mg(2+).

The protein localises to the cytoplasm. It catalyses the reaction apo-[ACP] + CoA = holo-[ACP] + adenosine 3',5'-bisphosphate + H(+). Transfers the 4'-phosphopantetheine moiety from coenzyme A to a Ser of acyl-carrier-protein. The chain is Holo-[acyl-carrier-protein] synthase from Pseudoalteromonas atlantica (strain T6c / ATCC BAA-1087).